Consider the following 314-residue polypeptide: Homeobox protein knotted-1-like 3 (314 aa).

An ELK domain is found at 218–238; sequence ELKIELKQGFKSRIEDVREEI. The homeobox; TALE-type DNA-binding region spans 239-302; sequence LRKRRAGKLP…NQRKRNWHNN (64 aa).

This sequence belongs to the TALE/KNOX homeobox family. Isoform 1 is expressed in roots and flowers, and at lower levels in leaf blades and leaf sheaths. Isoform 2 is expressed in roots and flowers.

It is found in the nucleus. This is Homeobox protein knotted-1-like 3 (HOS66) from Oryza sativa subsp. japonica (Rice).